A 436-amino-acid chain; its full sequence is Protein arginine methyltransferase NDUFAF7, mitochondrial (436 aa).

Residues 1–41 constitute a mitochondrion transit peptide; that stretch reads MNALVRRCVARAGLPCIWRGKCYSSGNEPAESNQVTPMLRH. The segment at 411 to 436 is disordered; sequence GSQERNACQSKTPSSSVAGFDELVWQ. Polar residues predominate over residues 413 to 427; it reads QERNACQSKTPSSSV.

The protein belongs to the NDUFAF7 family. As to quaternary structure, interacts with NDUFS2.

The protein localises to the mitochondrion. The catalysed reaction is L-arginyl-[protein] + 2 S-adenosyl-L-methionine = N(omega),N(omega)'-dimethyl-L-arginyl-[protein] + 2 S-adenosyl-L-homocysteine + 2 H(+). In terms of biological role, arginine methyltransferase involved in the assembly or stability of mitochondrial NADH:ubiquinone oxidoreductase complex (complex I). Acts by mediating symmetric dimethylation of 'Arg-118' of NDUFS2 after it assembles into the complex I, stabilizing the early intermediate complex. The protein is Protein arginine methyltransferase NDUFAF7, mitochondrial of Mus musculus (Mouse).